A 192-amino-acid chain; its full sequence is Small ribosomal subunit protein uS4B (192 aa).

Positions 83–145 constitute an S4 RNA-binding domain; the sequence is RRLDNLVYRL…SRKIQTYASN (63 aa).

Belongs to the universal ribosomal protein uS4 family. In terms of assembly, part of the 30S ribosomal subunit. Contacts protein S5. The interaction surface between S4 and S5 is involved in control of translational fidelity.

Functionally, one of the primary rRNA binding proteins, it binds directly to 16S rRNA where it nucleates assembly of the body of the 30S subunit. With S5 and S12 plays an important role in translational accuracy. The polypeptide is Small ribosomal subunit protein uS4B (rpsD2) (Clostridium acetobutylicum (strain ATCC 824 / DSM 792 / JCM 1419 / IAM 19013 / LMG 5710 / NBRC 13948 / NRRL B-527 / VKM B-1787 / 2291 / W)).